Consider the following 546-residue polypeptide: Phosphomethylpyrimidine synthase (546 aa).

Substrate-binding positions include asparagine 145, methionine 174, tyrosine 203, histidine 239, 259-261 (SRG), 300-303 (DGLR), and glutamate 339. Histidine 343 is a binding site for Zn(2+). Tyrosine 366 provides a ligand contact to substrate. Histidine 407 contributes to the Zn(2+) binding site. [4Fe-4S] cluster-binding residues include cysteine 487, cysteine 490, and cysteine 495.

The protein belongs to the ThiC family. The cofactor is [4Fe-4S] cluster.

It carries out the reaction 5-amino-1-(5-phospho-beta-D-ribosyl)imidazole + S-adenosyl-L-methionine = 4-amino-2-methyl-5-(phosphooxymethyl)pyrimidine + CO + 5'-deoxyadenosine + formate + L-methionine + 3 H(+). The protein operates within cofactor biosynthesis; thiamine diphosphate biosynthesis. Functionally, catalyzes the synthesis of the hydroxymethylpyrimidine phosphate (HMP-P) moiety of thiamine from aminoimidazole ribotide (AIR) in a radical S-adenosyl-L-methionine (SAM)-dependent reaction. The chain is Phosphomethylpyrimidine synthase from Mycobacterium ulcerans (strain Agy99).